We begin with the raw amino-acid sequence, 449 residues long: Guanine/hypoxanthine permease GhxP (449 aa).

Topologically, residues 1-25 are cytoplasmic; sequence MSTPSARTGGSLDAWFKISQRGSTV. Residues 26–49 traverse the membrane as a helical segment; that stretch reads RQEVVAGLTTFLAMVYSVIVVPGM. The Periplasmic portion of the chain corresponds to 50-59; sequence LGKAGFPPAA. Residues 60-78 traverse the membrane as a helical segment; that stretch reads VFVATCLVAGLGSIVMGLW. Residues 79–80 lie on the Cytoplasmic side of the membrane; it reads AN. The discontinuously helical transmembrane segment at 81–97 threads the bilayer; it reads LPLAIGCAISLTAFTAF. Residues 98–109 are Periplasmic-facing; the sequence is SLVLGQHISVPV. The helical transmembrane segment at 110 to 129 threads the bilayer; the sequence is ALGAVFLMGVLFTVISATGI. Over 130–141 the chain is Cytoplasmic; sequence RSWILRNLPHGV. The chain crosses the membrane as a helical span at residues 142–162; the sequence is AHGTGIGIGLFLLLIAANGVG. Over 163 to 180 the chain is Periplasmic; it reads LVIKNPLDGLPVALGDFA. A helical transmembrane segment spans residues 181-198; that stretch reads TFPVIMSLVGLAVIIGLE. Topologically, residues 199–202 are cytoplasmic; that stretch reads KLKV. Residues 203-222 form a helical membrane-spanning segment; that stretch reads PGGILLTIIGISIVGLIFDP. The Periplasmic segment spans residues 223–254; that stretch reads NVHFSGVFAMPSLSDENGNSLIGSLDIMGALN. The chain crosses the membrane as a helical span at residues 255-283; the sequence is PVVLPSVLALVMTAVFDATGTIRAVAGQA. The Cytoplasmic portion of the chain corresponds to 284–296; the sequence is NLLDKDGQIIDGG. Residues 297-312 traverse the membrane as a helical segment; the sequence is KALTTDSMSSVFSGLV. The Periplasmic segment spans residues 313-314; the sequence is GA. A discontinuously helical transmembrane segment spans residues 315 to 330; the sequence is APAAVYIESAAGTAAG. Residues 331-334 are Cytoplasmic-facing; that stretch reads GKTG. Residues 335–349 form a helical membrane-spanning segment; the sequence is LTAITVGVLFLLILF. Over 350–360 the chain is Periplasmic; that stretch reads LSPLSYLVPGY. Residues 361-380 form a helical membrane-spanning segment; it reads ATAPALMYVGLLMLSNVAKI. Residues 381–385 lie on the Cytoplasmic side of the membrane; that stretch reads DFADF. The segment at residues 386 to 421 is an intramembrane region (discontinuously helical); that stretch reads VDAMAGLVTAVFIVLTCNIVTGIMIGFATLVIGRLV. Residues 422-449 are Cytoplasmic-facing; sequence SGEWRKLNIGTVVIAVALVTFYAGGWAI.

This sequence belongs to the nucleobase:cation symporter-2 (NCS2) (TC 2.A.40) family. Azg-like subfamily.

The protein resides in the cell inner membrane. High-affinity transporter for guanine and hypoxanthine. This is Guanine/hypoxanthine permease GhxP (ghxP) from Escherichia coli O157:H7.